A 309-amino-acid chain; its full sequence is Olfactory receptor 7A40 (309 aa).

Residues 1-26 lie on the Extracellular side of the membrane; it reads MELKNDTQISKFILLGISEDPLWQPF. An N-linked (GlcNAc...) asparagine glycan is attached at Asn-5. A helical membrane pass occupies residues 27–47; that stretch reads LFGLFLFMYLVTLLGNLLIII. Over 48–57 the chain is Cytoplasmic; that stretch reads ATITDSHLHT. Residues 58–78 traverse the membrane as a helical segment; sequence PMYFFLSNLSFADICFTSASI. Residues 79–97 are Extracellular-facing; it reads PKMLVNIQTKNKVITYEGC. A disulfide bridge links Cys-97 with Cys-179. A helical membrane pass occupies residues 98–118; that stretch reads ISQVFFFILFGVLDNFLLAVM. Topologically, residues 119-139 are cytoplasmic; that stretch reads AYDRYVAICHPLHYMVIMNCR. The chain crosses the membrane as a helical span at residues 140 to 160; sequence LCGFLVLGSWVTTALNSLLQS. The Extracellular portion of the chain corresponds to 161 to 196; sequence SMALRLSFCTDLKIPHFVCELNQLVLLACNDTFPND. A helical transmembrane segment spans residues 197–217; it reads MVMYFAAILLGGGPLAGILYS. The Cytoplasmic portion of the chain corresponds to 218–244; the sequence is YSKIVSSIRAISSSQGKYKAFSTCASH. The chain crosses the membrane as a helical span at residues 245–265; sequence LSVVSLFYSTLLGVYLSSSFT. Residues 266–269 are Extracellular-facing; the sequence is QNSH. Residues 270-292 form a helical membrane-spanning segment; it reads STARASVMYSVVTPMLNPFIYSL. The Cytoplasmic portion of the chain corresponds to 293 to 309; that stretch reads RNKDLMGALRRLLRRKS.

The protein belongs to the G-protein coupled receptor 1 family.

The protein resides in the cell membrane. Odorant receptor. The sequence is that of Olfactory receptor 7A40 from Mus musculus (Mouse).